Here is a 363-residue protein sequence, read N- to C-terminus: Tetraacyldisaccharide 4'-kinase (363 aa).

62–69 lines the ATP pocket; the sequence is RVGGTGKT.

This sequence belongs to the LpxK family.

The catalysed reaction is a lipid A disaccharide + ATP = a lipid IVA + ADP + H(+). It functions in the pathway glycolipid biosynthesis; lipid IV(A) biosynthesis; lipid IV(A) from (3R)-3-hydroxytetradecanoyl-[acyl-carrier-protein] and UDP-N-acetyl-alpha-D-glucosamine: step 6/6. In terms of biological role, transfers the gamma-phosphate of ATP to the 4'-position of a tetraacyldisaccharide 1-phosphate intermediate (termed DS-1-P) to form tetraacyldisaccharide 1,4'-bis-phosphate (lipid IVA). The sequence is that of Tetraacyldisaccharide 4'-kinase from Polynucleobacter asymbioticus (strain DSM 18221 / CIP 109841 / QLW-P1DMWA-1) (Polynucleobacter necessarius subsp. asymbioticus).